The following is a 258-amino-acid chain: Sugar fermentation stimulation protein homolog (258 aa).

Belongs to the SfsA family.

The protein is Sugar fermentation stimulation protein homolog of Marinomonas sp. (strain MWYL1).